We begin with the raw amino-acid sequence, 128 residues long: MAAVGSLLGRLRQSTVKATGPALRRLHTSSWRADSSRASLTRVHRQAYARLYPVLLVKQDGSTIHIRYREPRRMLAMPIDLDTLSPEERRARLRKREAQLQSRKEYEQELSDDLHVERYRQFWTRTKK.

The transit peptide at 1 to 33 (MAAVGSLLGRLRQSTVKATGPALRRLHTSSWRA) directs the protein to the mitochondrion. At Ser-85 the chain carries Phosphoserine.

This sequence belongs to the mitochondrion-specific ribosomal protein mL55 family. Component of the mitochondrial large ribosomal subunit (mt-LSU). Mature mammalian 55S mitochondrial ribosomes consist of a small (28S) and a large (39S) subunit. The 28S small subunit contains a 12S ribosomal RNA (12S mt-rRNA) and 30 different proteins. The 39S large subunit contains a 16S rRNA (16S mt-rRNA), a copy of mitochondrial valine transfer RNA (mt-tRNA(Val)), which plays an integral structural role, and 52 different proteins.

The protein resides in the mitochondrion. In Homo sapiens (Human), this protein is Large ribosomal subunit protein mL55 (MRPL55).